Here is a 751-residue protein sequence, read N- to C-terminus: Conserved oligomeric Golgi complex subunit 5 (751 aa).

Disordered stretches follow at residues methionine 1–aspartate 21 and serine 244–glutamine 263.

Belongs to the COG5 family. In terms of assembly, component of the conserved oligomeric Golgi complex which is composed of eight different subunits and is required for normal Golgi morphology and localization.

The protein resides in the golgi apparatus membrane. Its function is as follows. Required for normal Golgi function and necessary during spermatogenesis. Required for cleavage furrow ingression during cytokinesis in dividing spermatocytes and for the extensive polarized cell growth that accompanies spermatid elongation. The polypeptide is Conserved oligomeric Golgi complex subunit 5 (fws) (Drosophila melanogaster (Fruit fly)).